We begin with the raw amino-acid sequence, 264 residues long: MKIALGIEYNGTHYFGWQRQRDVKSVQEELEKALSVVANHPVEVMCAGRTDAGVHGTGQVVHFETNVDRKMVAWTMGANANMPKDIAVRWATEVNEDFHARFSATARRYRYIIFNHALRPGILNSGVSHYHGHLDEKKMHEAGQYLLGENDFTSFRATHCQSRSPWRNMIHLNVTRHGHYIVIDIKANAFVHHMVRNITGSLIAVGKGDQKPEWIQWLLEAKDRKVAGATAKAEGLYLVDVDYPEHFGLPREPIGPLFLPDNLN.

Catalysis depends on Asp-51, which acts as the Nucleophile. Tyr-109 lines the substrate pocket.

It belongs to the tRNA pseudouridine synthase TruA family. Homodimer.

The catalysed reaction is uridine(38/39/40) in tRNA = pseudouridine(38/39/40) in tRNA. Its function is as follows. Formation of pseudouridine at positions 38, 39 and 40 in the anticodon stem and loop of transfer RNAs. The sequence is that of tRNA pseudouridine synthase A from Vibrio atlanticus (strain LGP32) (Vibrio splendidus (strain Mel32)).